The following is an 800-amino-acid chain: Ent-copalyl diphosphate synthase 2, chloroplastic (800 aa).

The N-terminal 47 residues, 1–47, are a transit peptide targeting the chloroplast; sequence MQMQVLTAASSLPRATLLRPAAAEPWRQSFLQLQARPIQRPGIMLHC. The segment at 52 to 80 is disordered; the sequence is QGQETRERRQLDDDEHARPPQGGDDDVAA. Basic and acidic residues predominate over residues 55–69; the sequence is ETRERRQLDDDEHAR. Lysine 242 contributes to the substrate binding site. Mg(2+) is bound by residues aspartate 374 and aspartate 376. Positions 374-377 match the DXDD motif motif; sequence DIDD. Lysine 461 provides a ligand contact to substrate.

Belongs to the terpene synthase family. Requires Mg(2+) as cofactor.

It localises to the plastid. Its subcellular location is the chloroplast. The enzyme catalyses (2E,6E,10E)-geranylgeranyl diphosphate = ent-copalyl diphosphate. Its pathway is secondary metabolite biosynthesis; terpenoid biosynthesis. Functionally, catalyzes the conversion of geranylgeranyl diphosphate to the phytoalexin precursor ent-copalyl diphosphate. The protein is Ent-copalyl diphosphate synthase 2, chloroplastic of Oryza sativa subsp. japonica (Rice).